The following is a 392-amino-acid chain: Sulfate adenylyltransferase (392 aa).

This sequence belongs to the sulfate adenylyltransferase family.

It carries out the reaction sulfate + ATP + H(+) = adenosine 5'-phosphosulfate + diphosphate. The protein operates within sulfur metabolism; hydrogen sulfide biosynthesis; sulfite from sulfate: step 1/3. This Nostoc punctiforme (strain ATCC 29133 / PCC 73102) protein is Sulfate adenylyltransferase.